A 421-amino-acid polypeptide reads, in one-letter code: 3-isopropylmalate dehydratase large subunit (421 aa).

[4Fe-4S] cluster contacts are provided by Cys-292, Cys-352, and Cys-355.

This sequence belongs to the aconitase/IPM isomerase family. LeuC type 2 subfamily. In terms of assembly, heterodimer of LeuC and LeuD. [4Fe-4S] cluster serves as cofactor.

The catalysed reaction is (2R,3S)-3-isopropylmalate = (2S)-2-isopropylmalate. It participates in amino-acid biosynthesis; L-leucine biosynthesis; L-leucine from 3-methyl-2-oxobutanoate: step 2/4. Its function is as follows. Catalyzes the isomerization between 2-isopropylmalate and 3-isopropylmalate, via the formation of 2-isopropylmaleate. The sequence is that of 3-isopropylmalate dehydratase large subunit from Herpetosiphon aurantiacus (strain ATCC 23779 / DSM 785 / 114-95).